The primary structure comprises 428 residues: MSSVVVVGTQWGDEGKGKITDYLSEKAEVVARYQGGNNAGHTIVFDGKKYKLHLIPSGIFYKDKICVIGNGMVIDPKALVEELAYLHDHGVDTSNLRISNRAHVILPYHIKLDIVEEDRKGANKIGTTRKGIGPAYMDKAARIGIRIADLLEKDTFAAKVAAVLEEKNRLFEKYYETDGFSAEEIVEEYFHYGEQIAKYVADTSVVLNDALDDGRRVLFEGAQGVMLDIDQGTYPFVTSSNPIAGGVTIGSGVGPSKIHHVVGVSKAYTTRVGDGPFPTELDDEIGDRIRKVGNEYGTTTGRPRRVGWFDSVVVRHARRVSGITDLSLNSIDVLTGLKTLKICTSYRYKGEVLDEFPASLNVLAECEPIYEELPGWEEDITGVKTLHELPENARTYVERVCQLTGIPLTVFSVGPDRSQTNMVRGVFA.

GTP-binding positions include 12–18 (GDEGKGK) and 40–42 (GHT). Residue D13 is the Proton acceptor of the active site. 2 residues coordinate Mg(2+): D13 and G40. IMP contacts are provided by residues 13-16 (DEGK), 38-41 (NAGH), T128, R142, Q223, T238, and R302. H41 functions as the Proton donor in the catalytic mechanism. 298 to 304 (TTTGRPR) serves as a coordination point for substrate. Residues R304, 330–332 (SID), and 412–414 (SVG) each bind GTP.

This sequence belongs to the adenylosuccinate synthetase family. As to quaternary structure, homodimer. Requires Mg(2+) as cofactor.

It is found in the cytoplasm. It catalyses the reaction IMP + L-aspartate + GTP = N(6)-(1,2-dicarboxyethyl)-AMP + GDP + phosphate + 2 H(+). It functions in the pathway purine metabolism; AMP biosynthesis via de novo pathway; AMP from IMP: step 1/2. Functionally, plays an important role in the de novo pathway of purine nucleotide biosynthesis. Catalyzes the first committed step in the biosynthesis of AMP from IMP. This Shouchella clausii (strain KSM-K16) (Alkalihalobacillus clausii) protein is Adenylosuccinate synthetase.